The following is a 698-amino-acid chain: Elongation factor G 1 (698 aa).

Residues Glu-8 to Ile-290 enclose the tr-type G domain. Residues Ala-17 to Thr-24, Asp-88 to His-92, and Asn-142 to Asp-145 each bind GTP.

It belongs to the TRAFAC class translation factor GTPase superfamily. Classic translation factor GTPase family. EF-G/EF-2 subfamily.

The protein resides in the cytoplasm. Catalyzes the GTP-dependent ribosomal translocation step during translation elongation. During this step, the ribosome changes from the pre-translocational (PRE) to the post-translocational (POST) state as the newly formed A-site-bound peptidyl-tRNA and P-site-bound deacylated tRNA move to the P and E sites, respectively. Catalyzes the coordinated movement of the two tRNA molecules, the mRNA and conformational changes in the ribosome. The polypeptide is Elongation factor G 1 (Shewanella denitrificans (strain OS217 / ATCC BAA-1090 / DSM 15013)).